The sequence spans 179 residues: MIPPFSFASWVAENEDKLHPPVNNYCLYSGEDFTLMVVGGPNSRNDYHGVFIMVVNQTEEWFYQVKGDMLLRIVENNTTFRDISIKEGEMFLLPGNTPHNPVRFRDTIGLVMERKRPEDSLDRLRWYCSKGKHKKPTIIREEIFHCADLGTQLKPLIERWQIDEESRRCGACGAIADPK.

An O2-binding site is contributed by arginine 44. The Fe cation site is built by histidine 48, glutamate 60, and histidine 99. Residue glutamate 60 coordinates substrate. Residues arginine 103 and glutamate 113 each contribute to the substrate site.

The protein belongs to the 3-HAO family. Requires Fe(2+) as cofactor.

It is found in the cytoplasm. The enzyme catalyses 3-hydroxyanthranilate + O2 = (2Z,4Z)-2-amino-3-carboxymuconate 6-semialdehyde. The protein operates within cofactor biosynthesis; NAD(+) biosynthesis; quinolinate from L-kynurenine: step 3/3. Its function is as follows. Catalyzes the oxidative ring opening of 3-hydroxyanthranilate to 2-amino-3-carboxymuconate semialdehyde, which spontaneously cyclizes to quinolinate. This chain is 3-hydroxyanthranilate 3,4-dioxygenase 2 (bna1-2), found in Aspergillus oryzae (strain ATCC 42149 / RIB 40) (Yellow koji mold).